Reading from the N-terminus, the 129-residue chain is Cocaine- and amphetamine-regulated transcript protein (129 aa).

Residues Met-1 to Ala-27 form the signal peptide. A Phosphotyrosine modification is found at Tyr-41. At Ser-48 the chain carries Phosphoserine. Intrachain disulfides connect Cys-95/Cys-113, Cys-101/Cys-121, and Cys-115/Cys-128.

It belongs to the CART family. As to expression, neuroendocrine tissues. Predominantly expressed in the hypothalamus, pituitary, and longitudinal muscle-myenteric plexus. Abundant expression is also seen in the midbrain/thalamus and eye. A lower level expression is seen in the other brain regions and adrenal.

The protein localises to the secreted. Functionally, satiety factor closely associated with the actions of leptin and neuropeptide y; this anorectic peptide inhibits both normal and starvation-induced feeding and completely blocks the feeding response induced by neuropeptide Y and regulated by leptin in the hypothalamus. In Rattus norvegicus (Rat), this protein is Cocaine- and amphetamine-regulated transcript protein (Cartpt).